Reading from the N-terminus, the 599-residue chain is Aspartate--tRNA(Asp/Asn) ligase (599 aa).

L-aspartate is bound at residue E173. The tract at residues 197–200 (QLFK) is aspartate. R219 serves as a coordination point for L-aspartate. ATP is bound by residues 219–221 (RDE) and Q228. H449 lines the L-aspartate pocket. Position 482 (E482) interacts with ATP. Residue R489 participates in L-aspartate binding. 534 to 537 (GLDR) contributes to the ATP binding site.

This sequence belongs to the class-II aminoacyl-tRNA synthetase family. Type 1 subfamily. Homodimer.

It is found in the cytoplasm. The enzyme catalyses tRNA(Asx) + L-aspartate + ATP = L-aspartyl-tRNA(Asx) + AMP + diphosphate. In terms of biological role, aspartyl-tRNA synthetase with relaxed tRNA specificity since it is able to aspartylate not only its cognate tRNA(Asp) but also tRNA(Asn). Reaction proceeds in two steps: L-aspartate is first activated by ATP to form Asp-AMP and then transferred to the acceptor end of tRNA(Asp/Asn). This is Aspartate--tRNA(Asp/Asn) ligase from Marinobacter nauticus (strain ATCC 700491 / DSM 11845 / VT8) (Marinobacter aquaeolei).